Here is a 460-residue protein sequence, read N- to C-terminus: Angiopoietin-related protein 3 (460 aa).

The N-terminal stretch at 1–16 (MFTIKLLLFIVPLVIS) is a signal peptide. The interval 17-165 (SRIDQDNSSF…PEHPEVTSLK (149 aa)) is sufficient to inhibit LPL lipase activity. Residues 17-207 (SRIDQDNSSF…EIENQLRRTS (191 aa)) are sufficient to inhibit LIPG/EL phospholipase activity. The required for inhibition of LPL lipase activity stretch occupies residues 32-56 (EPKSRFAMLDDVKILANGLLQLGHG). Positions 85 to 210 (LSLQTSEIKE…NQLRRTSIQE (126 aa)) form a coiled coil. Asparagine 115 carries an N-linked (GlcNAc...) asparagine glycan. O-linked (GalNAc) threonine glycosylation occurs at threonine 226. In terms of domain architecture, Fibrinogen C-terminal spans 237–455 (VKHDGIPAEC…STKMLIHPTD (219 aa)). Cysteine 246 and cysteine 274 are oxidised to a cystine. 2 N-linked (GlcNAc...) asparagine glycosylation sites follow: asparagine 296 and asparagine 357. Residues cysteine 394 and cysteine 408 are joined by a disulfide bond.

As to quaternary structure, interacts with ANGPTL8. Interacts with ITGB3. Post-translationally, O-glycosylated at Thr-226 by GALNT2; blocks processing and activation by proprotein convertases. In terms of processing, in part proteolytically cleaved by proprotein convertases; proposed to be involved in activation. Expressed principally in liver. Weakly expressed in kidney. Binds to adipocytes. Increased expression and colocalization with activated ITGB3 in glomeruli of patients with nephrotic syndrome showing effaced podocyte foot processes (at protein level).

Its subcellular location is the secreted. It localises to the cell projection. It is found in the lamellipodium. Acts in part as a hepatokine that is involved in regulation of lipid and glucose metabolism. Proposed to play a role in the trafficking of energy substrates to either storage or oxidative tissues in response to food intake. Has a stimulatory effect on plasma triglycerides (TG), which is achieved by suppressing plasma TG clearance via inhibition of LPL activity. The inhibition of LPL activity appears to be an indirect mechanism involving recruitment of proprotein convertases PCSK6 and FURIN to LPL leading to cleavage and dissociation of LPL from the cell surface; the function does not require ANGPTL3 proteolytic cleavage but seems to be mediated by the N-terminal domain, and is not inhibited by GPIHBP1. Can inhibit endothelial lipase, causing increased plasma levels of high density lipoprotein (HDL) cholesterol and phospholipids. Can bind to adipocytes to activate lipolysis, releasing free fatty acids and glycerol. Suppresses LPL specifically in oxidative tissues which is required to route very low density lipoprotein (VLDL)-TG to white adipose tissue (WAT) for storage in response to food; the function may involve cooperation with circulating, liver-derived ANGPTL8 and ANGPTL4 expression in WAT. Contributes to lower plasma levels of low density lipoprotein (LDL)-cholesterol by a mechanism that is independent of the canonical pathway implicating APOE and LDLR. May stimulate hypothalamic LPL activity. In terms of biological role, in vitro inhibits LPL activity; not effective on GPIHBP1-stabilized LPL. Its function is as follows. Involved in angiogenesis. Binds to endothelial cells via integrin alpha-V/beta-3 (ITGAV:ITGB3), activates FAK, MAPK and Akt signaling pathways and induces cell adhesion and cell migration. Secreted from podocytes, may modulate properties of glomerular endothelial cells involving integrin alpha-V/beta-3 and Akt signaling. May increase the motility of podocytes. May induce actin filament rearrangements in podocytes implicating integrin alpha-V/beta-3 and Rac1 activation. Binds to hematopoietic stem cells (HSC) and is involved in the regulation of HSC activity probably implicating down-regulation of IKZF1/IKAROS. The polypeptide is Angiopoietin-related protein 3 (ANGPTL3) (Homo sapiens (Human)).